An 842-amino-acid polypeptide reads, in one-letter code: Cullin-8 (842 aa).

The segment at 1–50 (MINESVSKREGFHESISRETSASNALGLYNKFNDERNPRYRTMIAELHEF) is required for interaction with MMS1. The span at 755–765 (LQSSNTGGERT) shows a compositional bias: polar residues. A disordered region spans residues 755 to 775 (LQSSNTGGERTSSAHHEGSNS). A Glycyl lysine isopeptide (Lys-Gly) (interchain with G-Cter in NEDD8) cross-link involves residue Lys-791.

The protein belongs to the cullin family. Component of multiple cullin-RING ligases (CRLs) composed of 4 subunits: the RING protein HRT1, the cullin RTT101, a linker protein MMS1, and one of many alternative substrate receptors belonging to a protein family described as DCAF (DDB1- and CUL4-associated factor). Component of a RTT101(MMS1-MMS22) complex with the substrate receptor MMS22. This complex further interacts with RTT107 and CTF4 to form RTT101-MMS1-MMS22-RTT107 and RTT101-MMS1-MMS22-CTF4 complexes respectively. Component of a RTT101(MSS1-CRT10) complex with the substrate receptor CRT10. Component of a RTT101(MSS1-ESC2) complex with the potential substrate receptor ESC2. Component of a RTT101(MSS1-ORC5) complex with the potential substrate receptor ORC5. Interacts (via C-ter) with HRT1; required for ubiquitin-ligase activity. Interacts (via N-ter) with MMS1. Neddylated. HRT1-binding is necessary for RUB1/NEDD8 modification of RTT101. The modification enhances ubiquitin-ligase activity.

It localises to the cytoplasm. It is found in the nucleus. It participates in protein modification; protein ubiquitination. In terms of biological role, core component of multiple cullin-RING-based E3 ubiquitin-protein ligase complexes (CRLs), which mediate the ubiquitination of target proteins. As a scaffold protein may contribute to catalysis through positioning of the substrate and the ubiquitin-conjugating enzyme. The CRL associates with CDC34 as the E2 ubiquitin-conjugating enzyme. The functional specificity of the CRL depends on the type of the associated substrate receptor protein. RTT101(MMS1-MMS22) promotes fork progression through damaged DNA or natural pause sites by stabilizing replication proteins like the replication fork-pausing complex (FPC) and leading-strand polymerase at stalled replication forks. RTT101(MMS1-MMS22) ubiquitinates the acetylated histones H3K56ac-H4 at lysine residues H3K121, H3K122 and H3K125. Ubiquitination is required for efficient histone deposition during replication-coupled nucleosome assembly, probably by facilitating the transfer of H3-H4 from ASF1 to other chaperones involved in histone deposition. RTT101(MMS1-CRT10) may regulate nucleotide synthesis through transcriptional regulation of ribonucleotide reductase. RTT101(MMS1) is also involved in the non-functional rRNA decay (NRD) of 25S rRNA through the selective, ubiquitination-dependent degradation of nonfunctional ribosomal particles. Ubiquitinates the FACT (facilitates chromatin transcription) complex subunit SPT16 in an MMS1-independent manner. Involved in regulation of Ty1 transposition and protects the genome from Ty1 integration upstream of tRNA genes. The protein is Cullin-8 (RTT101) of Saccharomyces cerevisiae (strain ATCC 204508 / S288c) (Baker's yeast).